The sequence spans 220 residues: Claudin-22 (220 aa).

Residues 1–10 (MGLVFRTATQ) are Cytoplasmic-facing. A helical transmembrane segment spans residues 11–31 (AAALLLSLLGWVLSCLTNYLP). Over 32 to 81 (HWKNLNLELNEMENWTMGLWKSCVIQEEVGRQCKDFDSFLALPAELQVSR) the chain is Extracellular. The chain crosses the membrane as a helical span at residues 82 to 102 (VLMSLCNGLGLLGLLASGCGL). Residues 103–120 (DCLRLGETQEGLKKRLLT) are Cytoplasmic-facing. Residues 121–141 (LGGTLLWTSGVMVLVPVSWVA) traverse the membrane as a helical segment. At 142 to 164 (HKTVREFWDETMPEIVPRWEFGE) the chain is on the extracellular side. A helical transmembrane segment spans residues 165-185 (ALFLGWFAGFCLVLGGCVLHC). At 186 to 220 (AACWSPAPAASSHYAVAGPRDHQQHLELKQANPEI) the chain is on the cytoplasmic side.

Belongs to the claudin family.

The protein resides in the cell junction. It localises to the tight junction. Its subcellular location is the cell membrane. Plays a major role in tight junction-specific obliteration of the intercellular space, through calcium-independent cell-adhesion activity. This chain is Claudin-22 (Cldn22), found in Mus musculus (Mouse).